Here is a 264-residue protein sequence, read N- to C-terminus: H-2 class II histocompatibility antigen, E-Q beta chain (264 aa).

Positions 1–26 (MVWLPRVPCVAAVILLLTVLSPPVAL) are cleaved as a signal peptide. The tract at residues 27–121 (VRDSRPWFLE…IFDNFLVRRR (95 aa)) is beta-1. Topologically, residues 27 to 225 (VRDSRPWFLE…KAQSTSAQNK (199 aa)) are extracellular. Cystine bridges form between C38-C106 and C144-C200. N-linked (GlcNAc...) asparagine glycosylation is present at N46. The interval 122–225 (VEPTVTVYPT…KAQSTSAQNK (104 aa)) is beta-2. The Ig-like C1-type domain maps to 124–214 (PTVTVYPTKT…PSLTDPVTVE (91 aa)). A helical membrane pass occupies residues 226–246 (MLSGVGGFVLGLLFLGAGLFI). At 247 to 264 (YFRNQKGQSGLQPTGLLS) the chain is on the cytoplasmic side.

The protein belongs to the MHC class II family.

It localises to the membrane. This Mus musculus (Mouse) protein is H-2 class II histocompatibility antigen, E-Q beta chain.